The chain runs to 585 residues: Glutamate decarboxylase 2 (585 aa).

The tract at residues 1-25 (MASPGSGFWSFGSEDGSGDPENPGT) is disordered. Ser3, Ser6, Ser10, Ser13, and Ser17 each carry phosphoserine. S-palmitoyl cysteine attachment occurs at residues Cys30 and Cys45. Residue 181–183 (QLS) coordinates substrate. An N6-(pyridoxal phosphate)lysine modification is found at Lys396. Arg558 serves as a coordination point for substrate.

It belongs to the group II decarboxylase family. In terms of assembly, homodimer. Pyridoxal 5'-phosphate is required as a cofactor. In terms of processing, the N-terminus is blocked. Post-translationally, phosphorylated; which does not affect kinetic parameters or subcellular location. Palmitoylated; which is required for presynaptic clustering.

It localises to the cytoplasm. It is found in the cytosol. Its subcellular location is the cytoplasmic vesicle. The protein resides in the presynaptic cell membrane. The protein localises to the golgi apparatus membrane. It carries out the reaction L-glutamate + H(+) = 4-aminobutanoate + CO2. In terms of biological role, catalyzes the production of GABA. This chain is Glutamate decarboxylase 2 (Gad2), found in Rattus norvegicus (Rat).